A 723-amino-acid chain; its full sequence is Tripartite motif-containing protein 42 (723 aa).

An RING-type zinc finger spans residues 146–192 (CPMCNRLRLHSFMLPCNHSLCEKCLRQLQKHAEVTENFFILICPMCS). B box-type zinc fingers lie at residues 235–280 (PILC…FVDT) and 285–326 (QDEK…TVSL). Cysteine 290, histidine 293, cysteine 313, and histidine 318 together coordinate Zn(2+). Residues 382–412 (KLRAILQEKEKIIMEQIENLEVSRQKEIEKY) are a coiled coil. The 59-residue stretch at 434-492 (LKETGQVAFLQSAKILVDQIEEGIQNTFRPDPQLRLHSLHCIPLDFAELSNAIHELFPT) folds into the COS domain. Residues 603–701 (TPGPIVIYQT…DICKVVTPDG (99 aa)) form the Fibronectin type-III domain.

This sequence belongs to the TRIM/RBCC family.

The polypeptide is Tripartite motif-containing protein 42 (Trim42) (Mus musculus (Mouse)).